The chain runs to 898 residues: DNA mismatch repair protein MutS (898 aa).

646-653 (GPNMGGKS) serves as a coordination point for ATP.

It belongs to the DNA mismatch repair MutS family.

In terms of biological role, this protein is involved in the repair of mismatches in DNA. It is possible that it carries out the mismatch recognition step. This protein has a weak ATPase activity. The chain is DNA mismatch repair protein MutS from Brucella ovis (strain ATCC 25840 / 63/290 / NCTC 10512).